A 226-amino-acid chain; its full sequence is PKHD-type hydroxylase AZC_3753 (226 aa).

The region spanning 78–178 (RILPPMFNRY…RVASFFWTQS (101 aa)) is the Fe2OG dioxygenase domain. Positions 96, 98, and 159 each coordinate Fe cation. Arginine 169 is a binding site for 2-oxoglutarate.

It depends on Fe(2+) as a cofactor. L-ascorbate serves as cofactor.

The chain is PKHD-type hydroxylase AZC_3753 from Azorhizobium caulinodans (strain ATCC 43989 / DSM 5975 / JCM 20966 / LMG 6465 / NBRC 14845 / NCIMB 13405 / ORS 571).